A 315-amino-acid polypeptide reads, in one-letter code: Cobalamin biosynthesis protein CobD (315 aa).

A run of 7 helical transmembrane segments spans residues 1–21 (MLDIIIAVIIDWIIGDPYWFP), 50–70 (VFGGFIVIIVSSISFLIPFII), 79–99 (VIYHVINIFFLWTVLAAKSLH), 151–171 (DGIIAPLLFAMLGGAPLAMMY), 209–229 (VTGIIMCLVSPIIGGNIFYSI), 250–270 (AAAAASGIMLGGTNIYFGEVV), and 291–311 (IILMYSSEILFIIIYVIIICF).

This sequence belongs to the CobD/CbiB family.

It is found in the cell membrane. It participates in cofactor biosynthesis; adenosylcobalamin biosynthesis. Functionally, converts cobyric acid to cobinamide by the addition of aminopropanol on the F carboxylic group. The chain is Cobalamin biosynthesis protein CobD from Clostridium acetobutylicum (strain ATCC 824 / DSM 792 / JCM 1419 / IAM 19013 / LMG 5710 / NBRC 13948 / NRRL B-527 / VKM B-1787 / 2291 / W).